The sequence spans 127 residues: Holo-[acyl-carrier-protein] synthase (127 aa).

Positions 9 and 58 each coordinate Mg(2+).

The protein belongs to the P-Pant transferase superfamily. AcpS family. Mg(2+) serves as cofactor.

The protein resides in the cytoplasm. The enzyme catalyses apo-[ACP] + CoA = holo-[ACP] + adenosine 3',5'-bisphosphate + H(+). Functionally, transfers the 4'-phosphopantetheine moiety from coenzyme A to a Ser of acyl-carrier-protein. This chain is Holo-[acyl-carrier-protein] synthase, found in Shewanella baltica (strain OS195).